We begin with the raw amino-acid sequence, 666 residues long: ATP synthase subunit alpha 2 (666 aa).

182-189 (GDRATGKT) serves as a coordination point for ATP. The tract at residues 527–666 (MPAEDAAGDI…DAEAEARHKR (140 aa)) is disordered. Residues 545-590 (ARGDADRDADHGANREVSREVSPEASREVSREVSCEVSHEADRDAA) are compositionally biased toward basic and acidic residues. Over residues 591–601 (ADAARVAGRAP) the composition is skewed to low complexity. Over residues 623-641 (ADGDRASASRPRPDARGDA) the composition is skewed to basic and acidic residues.

The protein belongs to the ATPase alpha/beta chains family. F-type ATPases have 2 components, CF(1) - the catalytic core - and CF(0) - the membrane proton channel. CF(1) has five subunits: alpha(3), beta(3), gamma(1), delta(1), epsilon(1). CF(0) has three main subunits: a(1), b(2) and c(9-12). The alpha and beta chains form an alternating ring which encloses part of the gamma chain. CF(1) is attached to CF(0) by a central stalk formed by the gamma and epsilon chains, while a peripheral stalk is formed by the delta and b chains.

It is found in the cell inner membrane. It carries out the reaction ATP + H2O + 4 H(+)(in) = ADP + phosphate + 5 H(+)(out). Produces ATP from ADP in the presence of a proton gradient across the membrane. The alpha chain is a regulatory subunit. This is ATP synthase subunit alpha 2 from Burkholderia pseudomallei (strain K96243).